Consider the following 46-residue polypeptide: Large ribosomal subunit protein bL36B (46 aa).

Belongs to the bacterial ribosomal protein bL36 family.

The sequence is that of Large ribosomal subunit protein bL36B from Enterobacter sp. (strain 638).